The chain runs to 94 residues: Integration host factor subunit beta (94 aa).

This sequence belongs to the bacterial histone-like protein family. As to quaternary structure, heterodimer of an alpha and a beta chain.

In terms of biological role, this protein is one of the two subunits of integration host factor, a specific DNA-binding protein that functions in genetic recombination as well as in transcriptional and translational control. This Edwardsiella ictaluri (strain 93-146) protein is Integration host factor subunit beta.